The chain runs to 200 residues: Holliday junction branch migration complex subunit RuvA (200 aa).

The segment at 1–63 (MYAYIKGTLS…EDAQLLYGFI (63 aa)) is domain I. The tract at residues 64 to 142 (NEEEKEMFLS…ITEENSDDLL (79 aa)) is domain II. The flexible linker stretch occupies residues 143-149 (QTQVNGN). The domain III stretch occupies residues 150-200 (EQNQIISEALLALQALGYSKRELTKVEKSLNKHNVNSVDEAVKIGLQTLVS).

The protein belongs to the RuvA family. In terms of assembly, homotetramer. Forms an RuvA(8)-RuvB(12)-Holliday junction (HJ) complex. HJ DNA is sandwiched between 2 RuvA tetramers; dsDNA enters through RuvA and exits via RuvB. An RuvB hexamer assembles on each DNA strand where it exits the tetramer. Each RuvB hexamer is contacted by two RuvA subunits (via domain III) on 2 adjacent RuvB subunits; this complex drives branch migration. In the full resolvosome a probable DNA-RuvA(4)-RuvB(12)-RuvC(2) complex forms which resolves the HJ.

Its subcellular location is the cytoplasm. Its function is as follows. The RuvA-RuvB-RuvC complex processes Holliday junction (HJ) DNA during genetic recombination and DNA repair, while the RuvA-RuvB complex plays an important role in the rescue of blocked DNA replication forks via replication fork reversal (RFR). RuvA specifically binds to HJ cruciform DNA, conferring on it an open structure. The RuvB hexamer acts as an ATP-dependent pump, pulling dsDNA into and through the RuvAB complex. HJ branch migration allows RuvC to scan DNA until it finds its consensus sequence, where it cleaves and resolves the cruciform DNA. This is Holliday junction branch migration complex subunit RuvA from Staphylococcus epidermidis (strain ATCC 35984 / DSM 28319 / BCRC 17069 / CCUG 31568 / BM 3577 / RP62A).